The following is a 252-amino-acid chain: 3-dehydroquinate dehydratase (252 aa).

Residues Ser21, 46–48, and Arg82 contribute to the 3-dehydroquinate site; that span reads EWR. His143 (proton donor/acceptor) is an active-site residue. Residue Lys170 is the Schiff-base intermediate with substrate of the active site. Residues Arg213, Ser232, and Gln236 each contribute to the 3-dehydroquinate site.

The protein belongs to the type-I 3-dehydroquinase family. Homodimer.

The enzyme catalyses 3-dehydroquinate = 3-dehydroshikimate + H2O. It participates in metabolic intermediate biosynthesis; chorismate biosynthesis; chorismate from D-erythrose 4-phosphate and phosphoenolpyruvate: step 3/7. In terms of biological role, involved in the third step of the chorismate pathway, which leads to the biosynthesis of aromatic amino acids. Catalyzes the cis-dehydration of 3-dehydroquinate (DHQ) and introduces the first double bond of the aromatic ring to yield 3-dehydroshikimate. This chain is 3-dehydroquinate dehydratase, found in Escherichia coli (strain 55989 / EAEC).